The following is a 385-amino-acid chain: 1-deoxy-D-xylulose 5-phosphate reductoisomerase (385 aa).

6 residues coordinate NADPH: Thr-10, Gly-11, Ser-12, Ile-13, Asn-38, and Asn-124. Lys-125 lines the 1-deoxy-D-xylulose 5-phosphate pocket. Residue Glu-126 coordinates NADPH. Asp-150 contributes to the Mn(2+) binding site. The 1-deoxy-D-xylulose 5-phosphate site is built by Ser-151, Glu-152, Ser-176, and His-199. Residue Glu-152 coordinates Mn(2+). Gly-205 is a binding site for NADPH. 1-deoxy-D-xylulose 5-phosphate-binding residues include Ser-212, Asn-217, Lys-218, and Glu-221. Glu-221 provides a ligand contact to Mn(2+).

This sequence belongs to the DXR family. Mg(2+) is required as a cofactor. Mn(2+) serves as cofactor.

It carries out the reaction 2-C-methyl-D-erythritol 4-phosphate + NADP(+) = 1-deoxy-D-xylulose 5-phosphate + NADPH + H(+). It participates in isoprenoid biosynthesis; isopentenyl diphosphate biosynthesis via DXP pathway; isopentenyl diphosphate from 1-deoxy-D-xylulose 5-phosphate: step 1/6. In terms of biological role, catalyzes the NADPH-dependent rearrangement and reduction of 1-deoxy-D-xylulose-5-phosphate (DXP) to 2-C-methyl-D-erythritol 4-phosphate (MEP). This is 1-deoxy-D-xylulose 5-phosphate reductoisomerase from Clostridium acetobutylicum (strain ATCC 824 / DSM 792 / JCM 1419 / IAM 19013 / LMG 5710 / NBRC 13948 / NRRL B-527 / VKM B-1787 / 2291 / W).